The sequence spans 965 residues: Isoleucine--tRNA ligase (965 aa).

Positions 68–78 match the 'HIGH' region motif; it reads PYANGSLHMGH. E582 is a binding site for L-isoleucyl-5'-AMP. The 'KMSKS' region signature appears at 623 to 627; it reads KMSKS. K626 is an ATP binding site. Zn(2+)-binding residues include C936, C939, C956, and C959.

This sequence belongs to the class-I aminoacyl-tRNA synthetase family. IleS type 1 subfamily. In terms of assembly, monomer. Zn(2+) serves as cofactor.

It localises to the cytoplasm. It catalyses the reaction tRNA(Ile) + L-isoleucine + ATP = L-isoleucyl-tRNA(Ile) + AMP + diphosphate. Catalyzes the attachment of isoleucine to tRNA(Ile). As IleRS can inadvertently accommodate and process structurally similar amino acids such as valine, to avoid such errors it has two additional distinct tRNA(Ile)-dependent editing activities. One activity is designated as 'pretransfer' editing and involves the hydrolysis of activated Val-AMP. The other activity is designated 'posttransfer' editing and involves deacylation of mischarged Val-tRNA(Ile). This chain is Isoleucine--tRNA ligase, found in Prochlorococcus marinus subsp. pastoris (strain CCMP1986 / NIES-2087 / MED4).